A 309-amino-acid chain; its full sequence is MEGPEQWVIVGGWGSASAEFSEGLSRNMGLKLVKPVFKLFPDEEEYVRIEGDISGFTGAIVVQSFERPASRSLVYSLLIADALKEAGVGRIVLMAPYMGYTRQDRVFLPGEPVSVRAVMRALASSGYNALASIEVHKEYVLDYFDGSTLNIFPFTYMLKETGISCGDNTIIVAPDKGSLPRVERLARETGCRSYGYLVKERDRITGEVRLAKSTVDPRGKNAIVVDDIISTGGTIALASQWLLENGANSVFVLAAHYLGIGNAEEKMMKAGVSRVVTGNTLPRKPSKIVTYVDLTGLAAGQLTKLVSNL.

ATP is bound by residues 42 to 44 (DEE) and 102 to 103 (RQ). The Mg(2+) site is built by His136 and Asp175. Residue Lys199 is part of the active site. Residues Arg201, Asp226, and 230–234 (STGGT) contribute to the D-ribose 5-phosphate site.

This sequence belongs to the ribose-phosphate pyrophosphokinase family. Class III (archaeal) subfamily. Requires Mg(2+) as cofactor.

Its subcellular location is the cytoplasm. The enzyme catalyses D-ribose 5-phosphate + ATP = 5-phospho-alpha-D-ribose 1-diphosphate + AMP + H(+). It participates in metabolic intermediate biosynthesis; 5-phospho-alpha-D-ribose 1-diphosphate biosynthesis; 5-phospho-alpha-D-ribose 1-diphosphate from D-ribose 5-phosphate (route I): step 1/1. Involved in the biosynthesis of the central metabolite phospho-alpha-D-ribosyl-1-pyrophosphate (PRPP) via the transfer of pyrophosphoryl group from ATP to 1-hydroxyl of ribose-5-phosphate (Rib-5-P). This is Ribose-phosphate pyrophosphokinase from Aeropyrum pernix (strain ATCC 700893 / DSM 11879 / JCM 9820 / NBRC 100138 / K1).